Here is an 856-residue protein sequence, read N- to C-terminus: MDEALGPPPAMAEKADELTPMLSQYLELCERYDDALVLFQVGDFYETFCEAAETTARLLEITLTQREDSTGTYPMAGIPIDNAESYIETLLDAGYRVAVADQVEAAEAASGLVDRAVTRVVTPGTLTETELLAEADNNFVACLTDGYGLALLDVSTGDCYATRLDRTAGVADELERFDPAEAVVGPDAPTDCFGEDCMVTPYERSAFELDAARERVEAYFGSTALASDAEIRACGALLAYAEYARGTTTDGETEPLDYINQLTRYDPREYMLLDAVAVRSLEIFEPRHVHGLEGAALVETLDETASALGGRELRDWLRRPLLDADRIERRLDAVEALVERVSDRERASERLADVYDLERLVAAVSRGRADARDLRALESTLSVVPELRACLDDAAGESEKLASVRERLDDCTAVRELIDRAIVDSPPVEITEGGVIRDGYDERLDELRATERDGKAWIDDLEAKERERTGIDSLKVGHNSVHGYYIEVTNPNLDAVPDDYQRRQTLKNSERFYTPELKEREDEIIRAEDRADELEYERFRSVREEVAAATERIQETARAVAELDVLCALATVAAQYDYCRPTVDADGIYIEGGRHPVVERTESSFVPNPTDLPATEPLAVITGPNMSGKSTYMRQVALTSVLTQLGSFVPAERAAVPIFDRVFTRVGASDDIAGGRSTFMVEMTELSTILDAADGRSLVVLDEVGRGTSTRDGYAIAQATTEYLHDEAGAFTLFATHHHELTDVAAELPQARNYHFAAARTADGVEFDHDLRPGAAEASYGVEVAEMAGVPEAVVDRADELLGGMRSNDTPPAAAASTDGGRVPEALLAELEAVDLAETTPLEALNLLSRLKSQLD.

An ATP-binding site is contributed by 623–630; sequence GPNMSGKS.

This sequence belongs to the DNA mismatch repair MutS family.

This protein is involved in the repair of mismatches in DNA. It is possible that it carries out the mismatch recognition step. This protein has a weak ATPase activity. This chain is DNA mismatch repair protein MutS, found in Natronomonas pharaonis (strain ATCC 35678 / DSM 2160 / CIP 103997 / JCM 8858 / NBRC 14720 / NCIMB 2260 / Gabara) (Halobacterium pharaonis).